An 89-amino-acid chain; its full sequence is MARKSIIARNEKRKKLVEKYAAKREELKAAGDYQALSQLPRDSSATRLRTRCVLTGRGRGNYRKFGLCRNMFRKLALEGKLPGVRKASW.

The protein belongs to the universal ribosomal protein uS14 family. In terms of assembly, part of the 30S ribosomal subunit. Contacts proteins S3 and S10.

Binds 16S rRNA, required for the assembly of 30S particles and may also be responsible for determining the conformation of the 16S rRNA at the A site. The protein is Small ribosomal subunit protein uS14 of Chlorobaculum tepidum (strain ATCC 49652 / DSM 12025 / NBRC 103806 / TLS) (Chlorobium tepidum).